The sequence spans 247 residues: E3 SUMO-protein ligase NSE2 (247 aa).

Residue methionine 1 is modified to N-acetylmethionine. Glycyl lysine isopeptide (Lys-Gly) (interchain with G-Cter in SUMO2) cross-links involve residues lysine 90 and lysine 107. Residue serine 116 is modified to Phosphoserine. Glycyl lysine isopeptide (Lys-Gly) (interchain with G-Cter in SUMO2) cross-links involve residues lysine 125 and lysine 130. The SP-RING-type zinc finger occupies 154 to 240 (MDEDMIVTQS…LRRAIESHNK (87 aa)). Residues cysteine 185, histidine 187, cysteine 210, and cysteine 215 each contribute to the Zn(2+) site.

Belongs to the NSE2 family. As to quaternary structure, component of the SMC5-SMC6 complex which consists at least of SMC5, SMC6, NSMCE2, NSMCE1, NSMCE4A or EID3 and NSMCE3. Post-translationally, sumoylated, possibly via autosumoylation.

Its subcellular location is the nucleus. The protein resides in the chromosome. It localises to the telomere. The protein localises to the PML body. It participates in protein modification; protein sumoylation. Its function is as follows. E3 SUMO-protein ligase component of the SMC5-SMC6 complex, a complex involved in DNA double-strand break repair by homologous recombination. Is not be required for the stability of the complex. The complex may promote sister chromatid homologous recombination by recruiting the SMC1-SMC3 cohesin complex to double-strand breaks. Acts as an E3 ligase mediating SUMO attachment to various proteins such as SMC6L1 and TSNAX, the shelterin complex subunits TERF1, TERF2, TINF2 and TERF2IP, RAD51AP1, and maybe the cohesin components RAD21 and STAG2. Required for recruitment of telomeres to PML nuclear bodies. Required for sister chromatid cohesion during prometaphase and mitotic progression. This chain is E3 SUMO-protein ligase NSE2 (Nsmce2), found in Rattus norvegicus (Rat).